Reading from the N-terminus, the 106-residue chain is uncharacterized protein (106 aa).

It localises to the mitochondrion. This is an uncharacterized protein from Arabidopsis thaliana (Mouse-ear cress).